Here is an 803-residue protein sequence, read N- to C-terminus: Translation initiation factor IF-2 (803 aa).

Disordered regions lie at residues 95-125 (PVVE…EKAE) and 138-178 (EVKE…EREE). Residues 111-121 (VPLTSDTTNLN) are compositionally biased toward polar residues. A compositionally biased stretch (basic and acidic residues) spans 138 to 155 (EVKEEAKKTPSEKKETPK). Residues 156-167 (KGPRKETRRSRK) show a composition bias toward basic residues. A compositionally biased stretch (basic and acidic residues) spans 168-178 (PDKEDKWEREE). The tr-type G domain maps to 302–471 (PRAPVVTIMG…LLQAEVLELK (170 aa)). The G1 stretch occupies residues 311 to 318 (GHVDHGKT). 311-318 (GHVDHGKT) lines the GTP pocket. The G2 stretch occupies residues 336–340 (GITQH). The interval 357–360 (DTPG) is G3. Residues 357 to 361 (DTPGH) and 411 to 414 (NKID) each bind GTP. The G4 stretch occupies residues 411–414 (NKID). Residues 447 to 449 (SAK) form a G5 region.

The protein belongs to the TRAFAC class translation factor GTPase superfamily. Classic translation factor GTPase family. IF-2 subfamily.

The protein resides in the cytoplasm. Its function is as follows. One of the essential components for the initiation of protein synthesis. Protects formylmethionyl-tRNA from spontaneous hydrolysis and promotes its binding to the 30S ribosomal subunits. Also involved in the hydrolysis of GTP during the formation of the 70S ribosomal complex. The chain is Translation initiation factor IF-2 from Coxiella burnetii (strain RSA 331 / Henzerling II).